A 571-amino-acid polypeptide reads, in one-letter code: Proline--tRNA ligase (571 aa).

It belongs to the class-II aminoacyl-tRNA synthetase family. ProS type 1 subfamily. In terms of assembly, homodimer.

It is found in the cytoplasm. The enzyme catalyses tRNA(Pro) + L-proline + ATP = L-prolyl-tRNA(Pro) + AMP + diphosphate. Functionally, catalyzes the attachment of proline to tRNA(Pro) in a two-step reaction: proline is first activated by ATP to form Pro-AMP and then transferred to the acceptor end of tRNA(Pro). As ProRS can inadvertently accommodate and process non-cognate amino acids such as alanine and cysteine, to avoid such errors it has two additional distinct editing activities against alanine. One activity is designated as 'pretransfer' editing and involves the tRNA(Pro)-independent hydrolysis of activated Ala-AMP. The other activity is designated 'posttransfer' editing and involves deacylation of mischarged Ala-tRNA(Pro). The misacylated Cys-tRNA(Pro) is not edited by ProRS. The protein is Proline--tRNA ligase of Haemophilus ducreyi (strain 35000HP / ATCC 700724).